A 108-amino-acid chain; its full sequence is Thaicobrin (108 aa).

The B30.2/SPRY domain maps to 1 to 108 (SPPGNWQKAD…IWQKGLWWLG (108 aa)).

This sequence belongs to the ohanin/vespryn family. Expressed by the venom gland.

It is found in the secreted. Functionally, neurotoxin that produces dose-dependent hypolocomotion and hyperalgesia in mice. May directly act on the central nervous system, as it is 6500-fold more potent when administered intracerebroventricularly than intraperitoneal. This Naja kaouthia (Monocled cobra) protein is Thaicobrin.